Reading from the N-terminus, the 1566-residue chain is Arginine-glutamic acid dipeptide repeats protein (1566 aa).

Positions 1–36 (MTADKDKDKDKEKDRDRDRDREREKRDKARESENSR) are enriched in basic and acidic residues. A disordered region spans residues 1–90 (MTADKDKDKD…KKKSRYERTD (90 aa)). 2 positions are modified to phosphoserine: S53 and S56. A compositionally biased stretch (basic residues) spans 74–85 (KNKKKPPKKKSR). Residues 103–283 (VVYRPGDCVY…PETRRLNSTQ (181 aa)) enclose the BAH domain. T120 bears the Phosphothreonine mark. Phosphoserine occurs at positions 142 and 304. The 104-residue stretch at 284-387 (GEIRVGPSHQ…KALQRLVKKP (104 aa)) folds into the ELM2 domain. In terms of domain architecture, SANT spans 391 to 443 (LIEKCWTEDEVKRFVKGLRQYGKNFFRIRKELLPNKETGELITFYYYWKKTPE). Positions 464-495 (TRTASTPVNTPSRPPSSEFLDLSSASEDDFDS) are disordered. Polar residues predominate over residues 465 to 474 (RTASTPVNTP). The span at 479-488 (SSEFLDLSSA) shows a compositional bias: low complexity. A GATA-type zinc finger spans residues 507 to 532 (CRHCFTTTSKDWHHGGRENILLCTDC). A disordered region spans residues 542–1133 (LPPIEKPVDP…PSHASQSARF (592 aa)). A Glycyl lysine isopeptide (Lys-Gly) (interchain with G-Cter in SUMO2) cross-link involves residue K560. Phosphoserine occurs at positions 594, 600, and 613. Residues 609-623 (SGRNSPSAASTSSND) are compositionally biased toward low complexity. Residues 624–640 (SKAETVKKSAKKVKEEA) are compositionally biased toward basic and acidic residues. Residue K637 forms a Glycyl lysine isopeptide (Lys-Gly) (interchain with G-Cter in SUMO2) linkage. S642, S656, S675, and S679 each carry phosphoserine. Residues 652-673 (EKVASDTEEADRTSSKKTKTQE) are compositionally biased toward basic and acidic residues. Over residues 688–708 (SDSRSVNDEGSSDPKDIDQDN) the composition is skewed to basic and acidic residues. The span at 709 to 720 (RSTSPSIPSPQD) shows a compositional bias: polar residues. Residues 726–751 (DSSAQQQMLQAQPPALQAPTGVTPAP) show a composition bias toward low complexity. Residues 752 to 767 (SSAPPGTPQLPTPGPT) show a composition bias toward pro residues. Residues 778–796 (SPTASQAPNQPQAPTAPVP) are compositionally biased toward low complexity. The span at 809 to 827 (QRPPSPHPPPHPSPHPPLQ) shows a compositional bias: pro residues. Residues 829-840 (LTGSAGQPSAPS) are compositionally biased toward polar residues. 2 stretches are compositionally biased toward low complexity: residues 843 to 865 (QPPL…LLQH) and 897 to 913 (SLQL…QQPP). Over residues 914–940 (REQPLPPAPLAMPHIKPPPTTPIPQLP) the composition is skewed to pro residues. The span at 970–980 (KPLSSLSTHHP) shows a compositional bias: low complexity. The segment covering 1030–1052 (PQPPFAQHPFVPGGPPPITPPTC) has biased composition (pro residues). Residues 1053–1085 (PSTSTPPAGPGTSAQPPCSGAAASGGSIAGGSS) show a composition bias toward low complexity. A phosphoserine mark is found at S1106, S1113, and S1115. Positions 1106–1117 (SPPPPPRSPSPE) are enriched in pro residues. T1119 bears the Phosphothreonine mark. Residues 1156–1211 (GSKLAKKREEAIEKAKREAEQKAREEREREKEKEKEREREREREREAERAAKASSS) adopt a coiled-coil conformation. The residue at position 1158 (K1158) is an N6-acetyllysine. The span at 1162 to 1206 (KREEAIEKAKREAEQKAREEREREKEKEKEREREREREREAERAA) shows a compositional bias: basic and acidic residues. A disordered region spans residues 1162–1246 (KREEAIEKAK…TTIAAVPPYI (85 aa)). Phosphotyrosine is present on Y1259. The residue at position 1266 (S1266) is a Phosphoserine.

Interacts with HDAC1. Interacts with ATN1. Interaction with ATN1 is improved when the poly-Gln region of ATN1 is extended. Interacts with FAT1. Widely expressed. Expressed in tumor cell lines.

Its subcellular location is the nucleus. In terms of biological role, plays a role as a transcriptional repressor during development. May play a role in the control of cell survival. Overexpression of RERE recruits BAX to the nucleus particularly to POD and triggers caspase-3 activation, leading to cell death. In Homo sapiens (Human), this protein is Arginine-glutamic acid dipeptide repeats protein (RERE).